The following is a 91-amino-acid chain: Co-chaperonin GroES (91 aa).

It belongs to the GroES chaperonin family. Heptamer of 7 subunits arranged in a ring. Interacts with the chaperonin GroEL.

It is found in the cytoplasm. Together with the chaperonin GroEL, plays an essential role in assisting protein folding. The GroEL-GroES system forms a nano-cage that allows encapsulation of the non-native substrate proteins and provides a physical environment optimized to promote and accelerate protein folding. GroES binds to the apical surface of the GroEL ring, thereby capping the opening of the GroEL channel. The protein is Co-chaperonin GroES of Oenococcus oeni (strain ATCC BAA-331 / PSU-1).